The sequence spans 475 residues: Lipoprotein lipase (475 aa).

The first 27 residues, M1–A27, serve as a signal peptide directing secretion. The interval R32 to T53 is interaction with GPIHBP1. C54 and C67 are joined by a disulfide. N-linked (GlcNAc...) asparagine glycosylation occurs at N70. At Y121 the chain carries 3'-nitrotyrosine. The active-site Nucleophile is the S159. D183 functions as the Charge relay system in the catalytic mechanism. Y191 is subject to 3'-nitrotyrosine. 4 residues coordinate Ca(2+): A194, R197, S199, and D202. The cysteines at positions 243 and 266 are disulfide-linked. The segment at C243–C266 is essential for determining substrate specificity. The active-site Charge relay system is H268. Disulfide bonds link C291–C310 and C302–C305. The 124-residue stretch at F341–K464 folds into the PLAT domain. Y343 is modified (3'-nitrotyrosine). An N-linked (GlcNAc...) asparagine glycan is attached at N386. The important for interaction with lipoprotein particles stretch occupies residues W417–W421. Residues K430–K434 are important for heparin binding. Residues I443–D467 are interaction with GPIHBP1. An intrachain disulfide couples C445 to C465.

Belongs to the AB hydrolase superfamily. Lipase family. As to quaternary structure, homodimer. Interacts with GPIHBP1 with 1:1 stoichiometry. Interacts with APOC2; the interaction activates LPL activity in the presence of lipids. Interaction with heparan sulfate proteoglycans is required to protect LPL against loss of activity. Associates with lipoprotein particles in blood plasma. Interacts with LMF1 and SEL1L; interaction with SEL1L is required to prevent aggregation of newly synthesized LPL in the endoplasmic reticulum (ER), and for normal export of LPL from the ER to the extracellular space. Interacts with SORL1; SORL1 acts as a sorting receptor, promoting LPL localization to endosomes and later to lysosomes, leading to degradation of newly synthesized LPL. Tyrosine nitration after lipopolysaccharide (LPS) challenge down-regulates the lipase activity. In terms of tissue distribution, detected in blood plasma. Detected in milk (at protein level).

The protein resides in the cell membrane. It is found in the secreted. The protein localises to the extracellular space. It localises to the extracellular matrix. The catalysed reaction is a triacylglycerol + H2O = a diacylglycerol + a fatty acid + H(+). The enzyme catalyses a 1,2-diacyl-sn-glycero-3-phosphocholine + H2O = a 2-acyl-sn-glycero-3-phosphocholine + a fatty acid + H(+). It carries out the reaction 1,2,3-tri-(9Z-octadecenoyl)-glycerol + H2O = di-(9Z)-octadecenoylglycerol + (9Z)-octadecenoate + H(+). It catalyses the reaction 1,2-di-(9Z-octadecenoyl)-sn-glycero-3-phosphocholine + H2O = (9Z-octadecenoyl)-sn-glycero-3-phosphocholine + (9Z)-octadecenoate + H(+). The catalysed reaction is 1,2,3-tributanoylglycerol + H2O = dibutanoylglycerol + butanoate + H(+). The enzyme catalyses 1,2-dihexadecanoyl-sn-glycero-3-phosphocholine + H2O = hexadecanoyl-sn-glycero-3-phosphocholine + hexadecanoate + H(+). The apolipoprotein APOC2 acts as a coactivator of LPL activity. Ca(2+) binding promotes protein stability and formation of the active homodimer. Interaction with GPIHBP1 protects LPL against inactivation by ANGPTL4. Inhibited by NaCl. Functionally, key enzyme in triglyceride metabolism. Catalyzes the hydrolysis of triglycerides from circulating chylomicrons and very low density lipoproteins (VLDL), and thereby plays an important role in lipid clearance from the blood stream, lipid utilization and storage. Although it has both phospholipase and triglyceride lipase activities it is primarily a triglyceride lipase with low but detectable phospholipase activity. Mediates margination of triglyceride-rich lipoprotein particles in capillaries. Recruited to its site of action on the luminal surface of vascular endothelium by binding to GPIHBP1 and cell surface heparan sulfate proteoglycans. The sequence is that of Lipoprotein lipase (LPL) from Homo sapiens (Human).